A 513-amino-acid polypeptide reads, in one-letter code: Light-independent protochlorophyllide reductase subunit B (513 aa).

D36 serves as a coordination point for [4Fe-4S] cluster. D299 acts as the Proton donor in catalysis. Position 434–435 (G434–M435) interacts with substrate.

Belongs to the ChlB/BchB/BchZ family. Protochlorophyllide reductase is composed of three subunits; ChlL, ChlN and ChlB. Forms a heterotetramer of two ChlB and two ChlN subunits. [4Fe-4S] cluster is required as a cofactor.

The protein localises to the plastid. It localises to the chloroplast. It catalyses the reaction chlorophyllide a + oxidized 2[4Fe-4S]-[ferredoxin] + 2 ADP + 2 phosphate = protochlorophyllide a + reduced 2[4Fe-4S]-[ferredoxin] + 2 ATP + 2 H2O. It functions in the pathway porphyrin-containing compound metabolism; chlorophyll biosynthesis (light-independent). Its function is as follows. Component of the dark-operative protochlorophyllide reductase (DPOR) that uses Mg-ATP and reduced ferredoxin to reduce ring D of protochlorophyllide (Pchlide) to form chlorophyllide a (Chlide). This reaction is light-independent. The NB-protein (ChlN-ChlB) is the catalytic component of the complex. In Zygnema circumcarinatum (Green alga), this protein is Light-independent protochlorophyllide reductase subunit B.